Here is a 281-residue protein sequence, read N- to C-terminus: Proteasome subunit beta (281 aa).

The propeptide at 1–53 is removed in mature form; by autocatalysis; sequence MEANTRSTGRLPAAFLTPGSSSFMDFLGEHQPEMLPGNRQLPPVQGVIEAPHG. Residue Thr54 is the Nucleophile of the active site.

This sequence belongs to the peptidase T1B family. In terms of assembly, the 20S proteasome core is composed of 14 alpha and 14 beta subunits that assemble into four stacked heptameric rings, resulting in a barrel-shaped structure. The two inner rings, each composed of seven catalytic beta subunits, are sandwiched by two outer rings, each composed of seven alpha subunits. The catalytic chamber with the active sites is on the inside of the barrel. Has probably a gated structure, the ends of the cylinder being occluded by the N-termini of the alpha-subunits. Is likely capped by the proteasome-associated ATPase, ARC.

The protein localises to the cytoplasm. The catalysed reaction is Cleavage of peptide bonds with very broad specificity.. It functions in the pathway protein degradation; proteasomal Pup-dependent pathway. Its activity is regulated as follows. The formation of the proteasomal ATPase ARC-20S proteasome complex, likely via the docking of the C-termini of ARC into the intersubunit pockets in the alpha-rings, may trigger opening of the gate for substrate entry. Interconversion between the open-gate and close-gate conformations leads to a dynamic regulation of the 20S proteasome proteolysis activity. Peptidolytic activity is completely inhibited by lactacystin, and to a lesser extent, by N-acetyl-Leu-Leu-norleucinal (Ac-LLnL) and benzoyloxycarbonyl-Leu-Leu-Leu-vinylsulfone (Z-LLL-VS) in vitro. In terms of biological role, component of the proteasome core, a large protease complex with broad specificity involved in protein degradation. The S.coelicolor proteasome is able to cleave oligopeptides after hydrophobic residues, but not after basic or acidic residues, thus displaying chymotrypsin-like activity but not trypsin-like activity. The sequence is that of Proteasome subunit beta from Streptomyces coelicolor (strain ATCC BAA-471 / A3(2) / M145).